The following is a 425-amino-acid chain: Enolase (425 aa).

Q163 provides a ligand contact to (2R)-2-phosphoglycerate. The active-site Proton donor is the E205. Residues D242, E286, and D313 each coordinate Mg(2+). Residues K338, R367, S368, and K389 each coordinate (2R)-2-phosphoglycerate. K338 serves as the catalytic Proton acceptor.

It belongs to the enolase family. Mg(2+) serves as cofactor.

The protein localises to the cytoplasm. It is found in the secreted. It localises to the cell surface. The catalysed reaction is (2R)-2-phosphoglycerate = phosphoenolpyruvate + H2O. Its pathway is carbohydrate degradation; glycolysis; pyruvate from D-glyceraldehyde 3-phosphate: step 4/5. Its function is as follows. Catalyzes the reversible conversion of 2-phosphoglycerate (2-PG) into phosphoenolpyruvate (PEP). It is essential for the degradation of carbohydrates via glycolysis. The sequence is that of Enolase from Helicobacter hepaticus (strain ATCC 51449 / 3B1).